Here is a 340-residue protein sequence, read N- to C-terminus: N-acetyl-gamma-glutamyl-phosphate reductase (340 aa).

Residue Cys-146 is part of the active site.

This sequence belongs to the NAGSA dehydrogenase family. Type 1 subfamily.

It localises to the cytoplasm. It carries out the reaction N-acetyl-L-glutamate 5-semialdehyde + phosphate + NADP(+) = N-acetyl-L-glutamyl 5-phosphate + NADPH + H(+). It functions in the pathway amino-acid biosynthesis; L-arginine biosynthesis; N(2)-acetyl-L-ornithine from L-glutamate: step 3/4. Functionally, catalyzes the NADPH-dependent reduction of N-acetyl-5-glutamyl phosphate to yield N-acetyl-L-glutamate 5-semialdehyde. The sequence is that of N-acetyl-gamma-glutamyl-phosphate reductase from Streptococcus thermophilus (strain CNRZ 1066).